A 296-amino-acid polypeptide reads, in one-letter code: Probable endonuclease 4 (296 aa).

Zn(2+)-binding residues include histidine 68, histidine 109, glutamate 144, aspartate 178, histidine 181, histidine 213, aspartate 226, histidine 228, and glutamate 258.

The protein belongs to the AP endonuclease 2 family. Zn(2+) serves as cofactor.

The enzyme catalyses Endonucleolytic cleavage to 5'-phosphooligonucleotide end-products.. Endonuclease IV plays a role in DNA repair. It cleaves phosphodiester bonds at apurinic or apyrimidinic (AP) sites, generating a 3'-hydroxyl group and a 5'-terminal sugar phosphate. This is Probable endonuclease 4 from Staphylococcus carnosus (strain TM300).